A 957-amino-acid polypeptide reads, in one-letter code: UvrABC system protein A (957 aa).

33–40 (GLSGSGKS) serves as a coordination point for ATP. The C4-type zinc-finger motif lies at 252–279 (CPQCGFSIPELEPRMFSFNSPFGACPTC). ABC transporter domains lie at 309 to 587 (WEPI…AKSL) and 607 to 935 (PNGR…KYLR). Residue 639–646 (GVSGSGKS) coordinates ATP. The segment at 738–764 (CEACRGDGIIKIEMHFLPDVYVPCEVC) adopts a C4-type zinc-finger fold.

This sequence belongs to the ABC transporter superfamily. UvrA family. In terms of assembly, forms a heterotetramer with UvrB during the search for lesions.

Its subcellular location is the cytoplasm. In terms of biological role, the UvrABC repair system catalyzes the recognition and processing of DNA lesions. UvrA is an ATPase and a DNA-binding protein. A damage recognition complex composed of 2 UvrA and 2 UvrB subunits scans DNA for abnormalities. When the presence of a lesion has been verified by UvrB, the UvrA molecules dissociate. This chain is UvrABC system protein A, found in Halalkalibacterium halodurans (strain ATCC BAA-125 / DSM 18197 / FERM 7344 / JCM 9153 / C-125) (Bacillus halodurans).